The primary structure comprises 121 residues: MARIAGVDLPRNKRVVIGLTYIYGIGNSTAQKILSEAGVSEDVRVRDLTADQEDKIRAVVDKYKVEGDLRREVSLNIKRLSEIGSYRGLRHRRHLPVRGQNTKNNARTRKGPAVSIAGKKK.

The disordered stretch occupies residues 93–121 (RHLPVRGQNTKNNARTRKGPAVSIAGKKK).

Belongs to the universal ribosomal protein uS13 family. As to quaternary structure, part of the 30S ribosomal subunit. Forms a loose heterodimer with protein S19. Forms two bridges to the 50S subunit in the 70S ribosome.

Located at the top of the head of the 30S subunit, it contacts several helices of the 16S rRNA. In the 70S ribosome it contacts the 23S rRNA (bridge B1a) and protein L5 of the 50S subunit (bridge B1b), connecting the 2 subunits; these bridges are implicated in subunit movement. Contacts the tRNAs in the A and P-sites. In Ligilactobacillus salivarius (strain UCC118) (Lactobacillus salivarius), this protein is Small ribosomal subunit protein uS13.